The sequence spans 908 residues: Alanine--tRNA ligase (908 aa).

The Zn(2+) site is built by H588, H592, C691, and H695.

This sequence belongs to the class-II aminoacyl-tRNA synthetase family. The cofactor is Zn(2+).

The protein localises to the cytoplasm. The catalysed reaction is tRNA(Ala) + L-alanine + ATP = L-alanyl-tRNA(Ala) + AMP + diphosphate. Functionally, catalyzes the attachment of alanine to tRNA(Ala) in a two-step reaction: alanine is first activated by ATP to form Ala-AMP and then transferred to the acceptor end of tRNA(Ala). Also edits incorrectly charged Ser-tRNA(Ala) and Gly-tRNA(Ala) via its editing domain. This chain is Alanine--tRNA ligase, found in Mycobacterium leprae (strain TN).